A 54-amino-acid polypeptide reads, in one-letter code: MARNDIRPIIKLKSTAGTGYTYVTRKNKRNNPDRITLKKFDPIARKHVEFREER.

The protein belongs to the bacterial ribosomal protein bL33 family.

This Corynebacterium jeikeium (strain K411) protein is Large ribosomal subunit protein bL33.